The following is a 539-amino-acid chain: MPIEIVCKIKFAEEDAKPKEKEAGDEQSLLGAAQGPAAPRDLATFASTSTLHGLGRACGPGPHGLRRTLWALALLTSLAAFLYQAASLARGYLTRPHLVAMDPAAPAPVAGFPAVTLCNINRFRHSALSDADIFHLANLTGLPPKDRDGHRAAGLRYPEPDMVDILNRTGHQLADMLKSCNFSGHHCSASNFSVVYTRYGKCYTFNADPQSSLPSRAGGMGSGLEIMLDIQQEEYLPIWRETNETSFEAGIRVQIHSQEEPPYIHQLGFGVSPGFQTFVSCQEQRLTYLPQPWGNCRAESELREPELQGYSAYSVSACRLRCEKEAVLQRCHCRMVHMPGNETICPPNIYIECADHTLDSLGGGSEGPCFCPTPCNLTRYGKEISMVKIPNRGSARYLARKYNRNETYIRENFLVLDVFFEALTSEAMEQQAAYGLSALLGDLGGQMGLFIGASILTLLEILDYIYEVSWDRLKRVWRRPKTPLRTSTGGISTLGLQELKEQSPCPSRGRAEGGGASSLLPNHHHPHGPPGSLFEDFAC.

Over 1–68 (MPIEIVCKIK…GPGPHGLRRT (68 aa)) the chain is Cytoplasmic. A helical transmembrane segment spans residues 69-89 (LWALALLTSLAAFLYQAASLA). At 90-438 (RGYLTRPHLV…EQQAAYGLSA (349 aa)) the chain is on the extracellular side. Cystine bridges form between cysteine 118-cysteine 202 and cysteine 180-cysteine 187. 4 N-linked (GlcNAc...) asparagine glycosylation sites follow: asparagine 191, asparagine 243, asparagine 341, and asparagine 376. 5 disulfides stabilise this stretch: cysteine 296–cysteine 375, cysteine 318–cysteine 371, cysteine 322–cysteine 369, cysteine 331–cysteine 353, and cysteine 333–cysteine 345. Residues 439–459 (LLGDLGGQMGLFIGASILTLL) form a helical membrane-spanning segment. A GAS motif; ion selectivity filter motif is present at residues 452–454 (GAS). Over 460-539 (EILDYIYEVS…PGSLFEDFAC (80 aa)) the chain is Cytoplasmic. Positions 500-531 (KEQSPCPSRGRAEGGGASSLLPNHHHPHGPPG) are disordered.

The protein belongs to the amiloride-sensitive sodium channel (TC 1.A.6) family. ASIC4 subfamily. Homotrimer. Heterotrimer; with other ASIC proteins producing functional channels.

It is found in the cell membrane. Does not exhibit measurable stand-alone pH-gated sodium channel activity but may form pH-gated heterotrimeric sodium channels. Its activity could also depend on alternative gating mechanisms. The chain is Acid-sensing ion channel 4 from Mus musculus (Mouse).